The primary structure comprises 287 residues: Bifunctional protein FolD (287 aa).

NADP(+)-binding positions include 168–170, S193, and I234; that span reads GRS.

Belongs to the tetrahydrofolate dehydrogenase/cyclohydrolase family. As to quaternary structure, homodimer.

It carries out the reaction (6R)-5,10-methylene-5,6,7,8-tetrahydrofolate + NADP(+) = (6R)-5,10-methenyltetrahydrofolate + NADPH. The enzyme catalyses (6R)-5,10-methenyltetrahydrofolate + H2O = (6R)-10-formyltetrahydrofolate + H(+). The protein operates within one-carbon metabolism; tetrahydrofolate interconversion. Functionally, catalyzes the oxidation of 5,10-methylenetetrahydrofolate to 5,10-methenyltetrahydrofolate and then the hydrolysis of 5,10-methenyltetrahydrofolate to 10-formyltetrahydrofolate. The polypeptide is Bifunctional protein FolD (Clostridioides difficile (strain 630) (Peptoclostridium difficile)).